The primary structure comprises 380 residues: Queuine tRNA-ribosyltransferase (380 aa).

Catalysis depends on Asp-96, which acts as the Proton acceptor. Residues 96–100 (DSGGF), Asp-150, Gln-193, and Gly-220 each bind substrate. The segment at 251-257 (GVGAPDS) is RNA binding. Asp-270 acts as the Nucleophile in catalysis. The interval 275-279 (TRIAR) is RNA binding; important for wobble base 34 recognition. The Zn(2+) site is built by Cys-308, Cys-310, Cys-313, and His-339.

The protein belongs to the queuine tRNA-ribosyltransferase family. Homodimer. Within each dimer, one monomer is responsible for RNA recognition and catalysis, while the other monomer binds to the replacement base PreQ1. Zn(2+) is required as a cofactor.

It carries out the reaction 7-aminomethyl-7-carbaguanine + guanosine(34) in tRNA = 7-aminomethyl-7-carbaguanosine(34) in tRNA + guanine. The protein operates within tRNA modification; tRNA-queuosine biosynthesis. Its function is as follows. Catalyzes the base-exchange of a guanine (G) residue with the queuine precursor 7-aminomethyl-7-deazaguanine (PreQ1) at position 34 (anticodon wobble position) in tRNAs with GU(N) anticodons (tRNA-Asp, -Asn, -His and -Tyr). Catalysis occurs through a double-displacement mechanism. The nucleophile active site attacks the C1' of nucleotide 34 to detach the guanine base from the RNA, forming a covalent enzyme-RNA intermediate. The proton acceptor active site deprotonates the incoming PreQ1, allowing a nucleophilic attack on the C1' of the ribose to form the product. After dissociation, two additional enzymatic reactions on the tRNA convert PreQ1 to queuine (Q), resulting in the hypermodified nucleoside queuosine (7-(((4,5-cis-dihydroxy-2-cyclopenten-1-yl)amino)methyl)-7-deazaguanosine). The protein is Queuine tRNA-ribosyltransferase of Streptococcus pneumoniae (strain P1031).